The primary structure comprises 88 residues: Large ribosomal subunit protein bL31 (88 aa).

Residues 67–88 (MGSVDNATSEKKSATDETSKES) form a disordered region. Residues 74-88 (TSEKKSATDETSKES) are compositionally biased toward basic and acidic residues.

The protein belongs to the bacterial ribosomal protein bL31 family. Type A subfamily. Part of the 50S ribosomal subunit.

Binds the 23S rRNA. This Synechococcus sp. (strain CC9311) protein is Large ribosomal subunit protein bL31.